Here is a 67-residue protein sequence, read N- to C-terminus: Conotoxin AbVIM (67 aa).

An N-terminal signal peptide occupies residues 1 to 17 (VLIIAVLFLTACQLIAT). The propeptide occupies 18 to 40 (ASYARSERKHPDLRLSSRNSKLS). 3 disulfides stabilise this stretch: C43–C57, C50–C61, and C56–C66.

Belongs to the conotoxin O1 superfamily. As to expression, expressed by the venom duct.

It localises to the secreted. The chain is Conotoxin AbVIM from Conus abbreviatus (Abbreviated cone).